Reading from the N-terminus, the 145-residue chain is Probable low molecular weight protein-tyrosine-phosphatase EpsP (145 aa).

Residue Cys-9 is the Nucleophile of the active site. Arg-15 is a catalytic residue. Residue Asp-114 is the Proton donor of the active site.

Belongs to the low molecular weight phosphotyrosine protein phosphatase family.

The catalysed reaction is O-phospho-L-tyrosyl-[protein] + H2O = L-tyrosyl-[protein] + phosphate. The protein operates within glycan metabolism; exopolysaccharide biosynthesis. May be involved in assembly or function of the EPS I polymerization/export complex and/or the EpsB ATPase. Alternatively it may function in the removal of the terminal phosphate from C55-isoprenyl pyrophosphate in order to recycle the C55-isoprenyl phosphate lipid carrier used in the synthesis of polysaccharide repeat units. The protein is Probable low molecular weight protein-tyrosine-phosphatase EpsP (epsP) of Ralstonia solanacearum (Pseudomonas solanacearum).